We begin with the raw amino-acid sequence, 160 residues long: MRQVVLNILIAFLWVLFQDEDSFQFSTFVSGFIIGLIVIYILHRFFGQAFYPKKIWIAIKFLGVYLYQLITSSISIINYILFKTRHMNPGLLTYETNLKNDWAITFLTILIIITPGSTVIRISKTTNKFFIHSIDVSEKEKESLLKSIKQYENLITEVSQ.

The next 3 membrane-spanning stretches (helical) occupy residues 22–42 (SFQF…IYIL), 61–81 (FLGV…NYIL), and 102–122 (WAIT…VIRI).

The protein belongs to the CPA3 antiporters (TC 2.A.63) subunit E family. May form a heterooligomeric complex that consists of seven subunits: mnhA2, mnhB2, mnhC2, mnhD2, mnhE2, mnhF2 and mnhG2.

The protein localises to the cell membrane. The protein is Putative antiporter subunit mnhE2 (mnhE2) of Staphylococcus haemolyticus (strain JCSC1435).